The chain runs to 892 residues: von Willebrand factor A domain-containing protein 7 (892 aa).

The signal sequence occupies residues 1–27 (MLPVEVPLSQLGPPVLLLQLLLPPTSA). The N-linked (GlcNAc...) asparagine glycan is linked to N54. The tract at residues 231-272 (YFGTNPPKPPGKCSHGGRFDQSSSQPPRGGINKDSTSPSFSP) is disordered. Residues 313-495 (ASSLSFVLDT…HIRDVAAVVG (183 aa)) enclose the VWFA domain.

Its subcellular location is the secreted. The polypeptide is von Willebrand factor A domain-containing protein 7 (Vwa7) (Rattus norvegicus (Rat)).